Consider the following 911-residue polypeptide: DNA mismatch repair protein MutS (911 aa).

A compositionally biased stretch (basic and acidic residues) spans Met-1–Asp-10. The tract at residues Met-1–Glu-24 is disordered. Residue Gly-662–Ser-669 coordinates ATP.

It belongs to the DNA mismatch repair MutS family.

Functionally, this protein is involved in the repair of mismatches in DNA. It is possible that it carries out the mismatch recognition step. This protein has a weak ATPase activity. This Bartonella quintana (strain Toulouse) (Rochalimaea quintana) protein is DNA mismatch repair protein MutS.